Here is a 213-residue protein sequence, read N- to C-terminus: Octanoyltransferase (213 aa).

The BPL/LPL catalytic domain occupies 35 to 213 (DERGDAVLLL…ERHLPTLIEP (179 aa)). Residues 73 to 80 (RGGKITWH), 145 to 147 (AIG), and 158 to 160 (GFS) each bind substrate. Cysteine 176 serves as the catalytic Acyl-thioester intermediate.

It belongs to the LipB family.

The protein localises to the cytoplasm. The enzyme catalyses octanoyl-[ACP] + L-lysyl-[protein] = N(6)-octanoyl-L-lysyl-[protein] + holo-[ACP] + H(+). It participates in protein modification; protein lipoylation via endogenous pathway; protein N(6)-(lipoyl)lysine from octanoyl-[acyl-carrier-protein]: step 1/2. In terms of biological role, catalyzes the transfer of endogenously produced octanoic acid from octanoyl-acyl-carrier-protein onto the lipoyl domains of lipoate-dependent enzymes. Lipoyl-ACP can also act as a substrate although octanoyl-ACP is likely to be the physiological substrate. The chain is Octanoyltransferase from Salinispora tropica (strain ATCC BAA-916 / DSM 44818 / JCM 13857 / NBRC 105044 / CNB-440).